The sequence spans 277 residues: Release factor glutamine methyltransferase (277 aa).

Residues 119–123, aspartate 142, tryptophan 170, and asparagine 184 contribute to the S-adenosyl-L-methionine site; that span reads GTGCG. Substrate is bound at residue 184-187; the sequence is NPPY.

It belongs to the protein N5-glutamine methyltransferase family. PrmC subfamily.

It carries out the reaction L-glutaminyl-[peptide chain release factor] + S-adenosyl-L-methionine = N(5)-methyl-L-glutaminyl-[peptide chain release factor] + S-adenosyl-L-homocysteine + H(+). In terms of biological role, methylates the class 1 translation termination release factors RF1/PrfA and RF2/PrfB on the glutamine residue of the universally conserved GGQ motif. The polypeptide is Release factor glutamine methyltransferase (Buchnera aphidicola subsp. Baizongia pistaciae (strain Bp)).